The sequence spans 149 residues: Large ribosomal subunit protein uL15 (149 aa).

Positions 14–63 (ASRKRVGRGSGSGLGCTSGKGNKGQNARAGGGVRPGFEGGQMPLQRRLPK) are disordered. 2 stretches are compositionally biased toward gly residues: residues 21–35 (RGSG…GKGN) and 42–52 (AGGGVRPGFEG).

Belongs to the universal ribosomal protein uL15 family. In terms of assembly, part of the 50S ribosomal subunit.

Binds to the 23S rRNA. The protein is Large ribosomal subunit protein uL15 of Nitratidesulfovibrio vulgaris (strain DSM 19637 / Miyazaki F) (Desulfovibrio vulgaris).